A 61-amino-acid chain; its full sequence is Neurotoxin-like protein 1 (61 aa).

Disulfide bonds link C3–C24, C17–C38, C42–C53, and C54–C59.

In terms of tissue distribution, expressed by the venom gland.

The protein resides in the secreted. This chain is Neurotoxin-like protein 1, found in Causus rhombeatus (Rhombic night adder).